Reading from the N-terminus, the 59-residue chain is Single-pass membrane and coiled-coil domain-containing protein 4 (59 aa).

The segment at 1 to 25 (MRQLRGKPKKETSKDKKERKQAMQE) is disordered. Positions 9–22 (KKETSKDKKERKQA) are enriched in basic and acidic residues. A coiled-coil region spans residues 9 to 31 (KKETSKDKKERKQAMQEARQQIT). Residues 32–52 (TVVLPTLAVVVLLIVVFVYVA) traverse the membrane as a helical segment.

Belongs to the SMCO4 family.

Its subcellular location is the membrane. The sequence is that of Single-pass membrane and coiled-coil domain-containing protein 4 (smco4) from Taeniopygia guttata (Zebra finch).